Consider the following 570-residue polypeptide: Sulfite reductase [NADPH] hemoprotein beta-component (570 aa).

Cys434, Cys440, Cys479, and Cys483 together coordinate [4Fe-4S] cluster. Residue Cys483 coordinates siroheme.

It belongs to the nitrite and sulfite reductase 4Fe-4S domain family. Alpha(8)-beta(8). The alpha component is a flavoprotein, the beta component is a hemoprotein. Requires siroheme as cofactor. The cofactor is [4Fe-4S] cluster.

The enzyme catalyses hydrogen sulfide + 3 NADP(+) + 3 H2O = sulfite + 3 NADPH + 4 H(+). The protein operates within sulfur metabolism; hydrogen sulfide biosynthesis; hydrogen sulfide from sulfite (NADPH route): step 1/1. Functionally, component of the sulfite reductase complex that catalyzes the 6-electron reduction of sulfite to sulfide. This is one of several activities required for the biosynthesis of L-cysteine from sulfate. The sequence is that of Sulfite reductase [NADPH] hemoprotein beta-component from Escherichia coli O9:H4 (strain HS).